The primary structure comprises 114 residues: Biofilm growth-associated repressor (114 aa).

Positions 17 to 111 (DMEKRANEVA…ALYTIFCTQE (95 aa)) constitute an HTH arsR-type domain. A DNA-binding region (H-T-H motif) is located at residues 51–74 (VGELEQQIGIGQPTLSQQLGVLRE).

In terms of biological role, represses an operon that probably comprises itself, PD_1892, PD_1893, PD_1894 and blh. Binds to a palindromic AT-rich sequence spanning the -10 region of the blh promoter and blocks transcription of the operon. In Xylella fastidiosa (strain Temecula1 / ATCC 700964), this protein is Biofilm growth-associated repressor (bigR).